A 264-amino-acid chain; its full sequence is Thymidylate synthase (264 aa).

R21 is a dUMP binding site. H51 provides a ligand contact to (6R)-5,10-methylene-5,6,7,8-tetrahydrofolate. 126-127 (RR) lines the dUMP pocket. The active-site Nucleophile is the C146. DUMP is bound by residues 166 to 169 (RSAD), N177, and 207 to 209 (HLY). A (6R)-5,10-methylene-5,6,7,8-tetrahydrofolate-binding site is contributed by D169. Residue A263 coordinates (6R)-5,10-methylene-5,6,7,8-tetrahydrofolate.

Belongs to the thymidylate synthase family. Bacterial-type ThyA subfamily. Homodimer.

It localises to the cytoplasm. The catalysed reaction is dUMP + (6R)-5,10-methylene-5,6,7,8-tetrahydrofolate = 7,8-dihydrofolate + dTMP. The protein operates within pyrimidine metabolism; dTTP biosynthesis. Its function is as follows. Catalyzes the reductive methylation of 2'-deoxyuridine-5'-monophosphate (dUMP) to 2'-deoxythymidine-5'-monophosphate (dTMP) while utilizing 5,10-methylenetetrahydrofolate (mTHF) as the methyl donor and reductant in the reaction, yielding dihydrofolate (DHF) as a by-product. This enzymatic reaction provides an intracellular de novo source of dTMP, an essential precursor for DNA biosynthesis. The chain is Thymidylate synthase from Cupriavidus necator (strain ATCC 17699 / DSM 428 / KCTC 22496 / NCIMB 10442 / H16 / Stanier 337) (Ralstonia eutropha).